We begin with the raw amino-acid sequence, 185 residues long: MKTAQELRVGNVVMVGKDPLVVQKAEYNKSGRNAAVVKLKFKNLLTGSGSESVYKADEKFDVVVLDRKECTYSYFGDPMYVFMDEEYNQYEIEAESMGDALNYLEEAMPVEVVFYDGRAISVELPTILVREITYTEPAVRGDTSGKVLKPAKINTGFELNVPLFCAIGDKIEIDTRTNEYRSRVN.

Belongs to the elongation factor P family.

The protein localises to the cytoplasm. It functions in the pathway protein biosynthesis; polypeptide chain elongation. Functionally, involved in peptide bond synthesis. Stimulates efficient translation and peptide-bond synthesis on native or reconstituted 70S ribosomes in vitro. Probably functions indirectly by altering the affinity of the ribosome for aminoacyl-tRNA, thus increasing their reactivity as acceptors for peptidyl transferase. The chain is Elongation factor P from Bordetella petrii (strain ATCC BAA-461 / DSM 12804 / CCUG 43448).